Here is a 632-residue protein sequence, read N- to C-terminus: 1-deoxy-D-xylulose-5-phosphate synthase (632 aa).

Thiamine diphosphate is bound by residues histidine 77 and 118 to 120; that span reads GHS. A Mg(2+)-binding site is contributed by aspartate 149. Thiamine diphosphate contacts are provided by residues 150–151, asparagine 178, tyrosine 289, and glutamate 372; that span reads GA. Asparagine 178 contacts Mg(2+).

The protein belongs to the transketolase family. DXPS subfamily. In terms of assembly, homodimer. Requires Mg(2+) as cofactor. It depends on thiamine diphosphate as a cofactor.

It catalyses the reaction D-glyceraldehyde 3-phosphate + pyruvate + H(+) = 1-deoxy-D-xylulose 5-phosphate + CO2. Its pathway is metabolic intermediate biosynthesis; 1-deoxy-D-xylulose 5-phosphate biosynthesis; 1-deoxy-D-xylulose 5-phosphate from D-glyceraldehyde 3-phosphate and pyruvate: step 1/1. Catalyzes the acyloin condensation reaction between C atoms 2 and 3 of pyruvate and glyceraldehyde 3-phosphate to yield 1-deoxy-D-xylulose-5-phosphate (DXP). The chain is 1-deoxy-D-xylulose-5-phosphate synthase from Listeria innocua serovar 6a (strain ATCC BAA-680 / CLIP 11262).